The chain runs to 126 residues: Holo-[acyl-carrier-protein] synthase (126 aa).

Residues aspartate 9 and glutamate 58 each contribute to the Mg(2+) site.

Belongs to the P-Pant transferase superfamily. AcpS family. Mg(2+) serves as cofactor.

The protein resides in the cytoplasm. The enzyme catalyses apo-[ACP] + CoA = holo-[ACP] + adenosine 3',5'-bisphosphate + H(+). In terms of biological role, transfers the 4'-phosphopantetheine moiety from coenzyme A to a Ser of acyl-carrier-protein. The protein is Holo-[acyl-carrier-protein] synthase of Yersinia pestis bv. Antiqua (strain Angola).